The chain runs to 119 residues: Basic phospholipase A2 notechis II-5 (119 aa).

Intrachain disulfides connect C11/C71, C27/C118, C29/C45, C44/C99, C51/C92, C60/C85, and C78/C90. The Ca(2+) site is built by Y28, G30, and G32. H48 is an active-site residue. D49 contacts Ca(2+). Residue D93 is part of the active site.

It belongs to the phospholipase A2 family. Group I subfamily. D49 sub-subfamily. It depends on Ca(2+) as a cofactor. In terms of tissue distribution, expressed by the venom gland.

It localises to the secreted. It carries out the reaction a 1,2-diacyl-sn-glycero-3-phosphocholine + H2O = a 1-acyl-sn-glycero-3-phosphocholine + a fatty acid + H(+). Its function is as follows. Snake venom phospholipase A2 (PLA2) that inhibits neuromuscular transmission by blocking acetylcholine release from the nerve termini. Notechis II-5 is less toxic than notexin but has a higher specific phospholipase activity. PLA2 catalyzes the calcium-dependent hydrolysis of the 2-acyl groups in 3-sn-phosphoglycerides. The chain is Basic phospholipase A2 notechis II-5 from Notechis scutatus scutatus (Mainland tiger snake).